The primary structure comprises 175 residues: Adenine phosphoribosyltransferase (175 aa).

This sequence belongs to the purine/pyrimidine phosphoribosyltransferase family. As to quaternary structure, homodimer.

It localises to the cytoplasm. The catalysed reaction is AMP + diphosphate = 5-phospho-alpha-D-ribose 1-diphosphate + adenine. It functions in the pathway purine metabolism; AMP biosynthesis via salvage pathway; AMP from adenine: step 1/1. In terms of biological role, catalyzes a salvage reaction resulting in the formation of AMP, that is energically less costly than de novo synthesis. This Caldicellulosiruptor bescii (strain ATCC BAA-1888 / DSM 6725 / KCTC 15123 / Z-1320) (Anaerocellum thermophilum) protein is Adenine phosphoribosyltransferase.